Consider the following 147-residue polypeptide: Ubiquitin-conjugating enzyme E2 D4 (147 aa).

Residues 1 to 147 (MALKRIQKEL…AREWTQKYAM (147 aa)) enclose the UBC core domain. The active-site Glycyl thioester intermediate is the Cys85.

The protein belongs to the ubiquitin-conjugating enzyme family. In terms of assembly, interacts with map3k10/mlk2. In terms of tissue distribution, at embryonic stages 28 to 35, expressed in the somites, eye primordia, otic vesicle and branchial arches. By stage 35, also weakly expressed in the pronephros.

It catalyses the reaction S-ubiquitinyl-[E1 ubiquitin-activating enzyme]-L-cysteine + [E2 ubiquitin-conjugating enzyme]-L-cysteine = [E1 ubiquitin-activating enzyme]-L-cysteine + S-ubiquitinyl-[E2 ubiquitin-conjugating enzyme]-L-cysteine.. Its pathway is protein modification; protein ubiquitination. Catalyzes the covalent attachment of ubiquitin to other proteins. Regulates pronephros development, possibly by promoting ubiquitination and thus inactivation or degradation of map3k10/mlk2. The sequence is that of Ubiquitin-conjugating enzyme E2 D4 (ube2d4) from Xenopus laevis (African clawed frog).